The sequence spans 359 residues: Peptide chain release factor 1 (359 aa).

Q235 carries the post-translational modification N5-methylglutamine.

The protein belongs to the prokaryotic/mitochondrial release factor family. Post-translationally, methylated by PrmC. Methylation increases the termination efficiency of RF1.

It localises to the cytoplasm. Functionally, peptide chain release factor 1 directs the termination of translation in response to the peptide chain termination codons UAG and UAA. The sequence is that of Peptide chain release factor 1 from Ehrlichia ruminantium (strain Gardel).